Here is a 491-residue protein sequence, read N- to C-terminus: Ribonuclease G (491 aa).

Residues 40 to 129 (GNIYKGRVTR…LTTDITLPSR (90 aa)) enclose the S1 motif domain. Residues D305 and D348 each coordinate Mg(2+).

The protein belongs to the RNase E/G family. RNase G subfamily. Homodimer, in equilibrium with possible higher multimers. Requires Mg(2+) as cofactor.

It localises to the cytoplasm. An endonuclease that acts in the processing of the 5'-end of 16S rRNA and 23S rRNA. It prefers 5'-monophosphorylated substrates and cleaves single-stranded sites rich in A and U residues; contributes to tRNA processing and mRNA turnover. The sequence is that of Ribonuclease G (rng) from Haemophilus influenzae (strain ATCC 51907 / DSM 11121 / KW20 / Rd).